The following is a 268-amino-acid chain: Imidazole glycerol phosphate synthase subunit HisF (268 aa).

Catalysis depends on residues aspartate 12 and aspartate 131.

This sequence belongs to the HisA/HisF family. In terms of assembly, heterodimer of HisH and HisF.

The protein localises to the cytoplasm. It carries out the reaction 5-[(5-phospho-1-deoxy-D-ribulos-1-ylimino)methylamino]-1-(5-phospho-beta-D-ribosyl)imidazole-4-carboxamide + L-glutamine = D-erythro-1-(imidazol-4-yl)glycerol 3-phosphate + 5-amino-1-(5-phospho-beta-D-ribosyl)imidazole-4-carboxamide + L-glutamate + H(+). It functions in the pathway amino-acid biosynthesis; L-histidine biosynthesis; L-histidine from 5-phospho-alpha-D-ribose 1-diphosphate: step 5/9. In terms of biological role, IGPS catalyzes the conversion of PRFAR and glutamine to IGP, AICAR and glutamate. The HisF subunit catalyzes the cyclization activity that produces IGP and AICAR from PRFAR using the ammonia provided by the HisH subunit. The sequence is that of Imidazole glycerol phosphate synthase subunit HisF from Chelativorans sp. (strain BNC1).